A 185-amino-acid chain; its full sequence is Thymidine kinase (185 aa).

ATP-binding positions include 7 to 14 and 83 to 86; these read GPMFAGKT and DEIQ. Glu-84 (proton acceptor) is an active-site residue. Cys-139, Cys-142, Cys-177, and His-180 together coordinate Zn(2+).

This sequence belongs to the thymidine kinase family. As to quaternary structure, homotetramer.

It is found in the cytoplasm. The catalysed reaction is thymidine + ATP = dTMP + ADP + H(+). This chain is Thymidine kinase, found in Pyrobaculum aerophilum (strain ATCC 51768 / DSM 7523 / JCM 9630 / CIP 104966 / NBRC 100827 / IM2).